Consider the following 415-residue polypeptide: Phosphoglycerate kinase (415 aa).

Substrate contacts are provided by residues 24–26 (DLN), Arg39, 62–65 (HLGR), Arg121, and Arg161. Residues Lys211, Gly307, Glu338, and 367-370 (GGDS) contribute to the ATP site.

The protein belongs to the phosphoglycerate kinase family. As to quaternary structure, monomer.

The protein localises to the cytoplasm. It catalyses the reaction (2R)-3-phosphoglycerate + ATP = (2R)-3-phospho-glyceroyl phosphate + ADP. It functions in the pathway carbohydrate degradation; glycolysis; pyruvate from D-glyceraldehyde 3-phosphate: step 2/5. This is Phosphoglycerate kinase from Micrococcus luteus (strain ATCC 4698 / DSM 20030 / JCM 1464 / CCM 169 / CCUG 5858 / IAM 1056 / NBRC 3333 / NCIMB 9278 / NCTC 2665 / VKM Ac-2230) (Micrococcus lysodeikticus).